Reading from the N-terminus, the 552-residue chain is Terpene synthase 5 (552 aa).

Residues Asp307, Asp311, and Glu457 each coordinate Mg(2+). A DDXXD motif motif is present at residues 307–311 (DDTYD).

It belongs to the terpene synthase family. It depends on Mg(2+) as a cofactor.

Its function is as follows. Catalyzes the cyclization of farnesyl diphosphate to multiple sesquiterpenes, such as olefins and sesquiterpene alcohols. The chain is Terpene synthase 5 (TPS5) from Ricinus communis (Castor bean).